A 352-amino-acid chain; its full sequence is Probable protein phosphatase 2C 56 (352 aa).

Disordered regions lie at residues 18-37 and 53-87; these read RGRRVAASPSPGGTPAASRG and SSSSFAPPRMQARRAAGSAARTRSPSQSNGWITGG. Composition is skewed to low complexity over residues 23-37 and 53-75; these read AASPSPGGTPAASRG and SSSSFAPPRMQARRAAGSAARTR. In terms of domain architecture, PPM-type phosphatase spans 96–343; sequence SWDYSSFKGR…DNITCIVLQF (248 aa). Mn(2+) contacts are provided by aspartate 132, glycine 133, aspartate 295, and aspartate 334.

This sequence belongs to the PP2C family. It depends on Mg(2+) as a cofactor. The cofactor is Mn(2+).

It catalyses the reaction O-phospho-L-seryl-[protein] + H2O = L-seryl-[protein] + phosphate. It carries out the reaction O-phospho-L-threonyl-[protein] + H2O = L-threonyl-[protein] + phosphate. The protein is Probable protein phosphatase 2C 56 of Oryza sativa subsp. japonica (Rice).